We begin with the raw amino-acid sequence, 593 residues long: Aspartate--tRNA ligase (593 aa).

Glu-181 serves as a coordination point for L-aspartate. The aspartate stretch occupies residues 205–208 (QLYK). Arg-227 lines the L-aspartate pocket. ATP contacts are provided by residues 227 to 229 (RDE) and Gln-236. L-aspartate is bound at residue His-455. Glu-489 contacts ATP. Residue Arg-496 participates in L-aspartate binding. 541 to 544 (GLDR) contacts ATP.

It belongs to the class-II aminoacyl-tRNA synthetase family. Type 1 subfamily. As to quaternary structure, homodimer.

Its subcellular location is the cytoplasm. It carries out the reaction tRNA(Asp) + L-aspartate + ATP = L-aspartyl-tRNA(Asp) + AMP + diphosphate. Its function is as follows. Catalyzes the attachment of L-aspartate to tRNA(Asp) in a two-step reaction: L-aspartate is first activated by ATP to form Asp-AMP and then transferred to the acceptor end of tRNA(Asp). This chain is Aspartate--tRNA ligase, found in Ruminiclostridium cellulolyticum (strain ATCC 35319 / DSM 5812 / JCM 6584 / H10) (Clostridium cellulolyticum).